The primary structure comprises 408 residues: S-adenosylmethionine synthase (408 aa).

Histidine 19 contributes to the ATP binding site. A Mg(2+)-binding site is contributed by aspartate 21. Residue glutamate 47 participates in K(+) binding. Residues glutamate 60 and glutamine 104 each coordinate L-methionine. The interval 104–114 is flexible loop; it reads QSPEIASGVDH. Residues 185–187, 255–256, aspartate 264, 270–271, alanine 287, and lysine 291 contribute to the ATP site; these read DAK, RF, and RK. Aspartate 264 is a binding site for L-methionine. Lysine 295 lines the L-methionine pocket.

This sequence belongs to the AdoMet synthase family. Homotetramer; dimer of dimers. Mg(2+) is required as a cofactor. Requires K(+) as cofactor.

It localises to the cytoplasm. It carries out the reaction L-methionine + ATP + H2O = S-adenosyl-L-methionine + phosphate + diphosphate. It participates in amino-acid biosynthesis; S-adenosyl-L-methionine biosynthesis; S-adenosyl-L-methionine from L-methionine: step 1/1. In terms of biological role, catalyzes the formation of S-adenosylmethionine (AdoMet) from methionine and ATP. The overall synthetic reaction is composed of two sequential steps, AdoMet formation and the subsequent tripolyphosphate hydrolysis which occurs prior to release of AdoMet from the enzyme. The protein is S-adenosylmethionine synthase of Deinococcus radiodurans (strain ATCC 13939 / DSM 20539 / JCM 16871 / CCUG 27074 / LMG 4051 / NBRC 15346 / NCIMB 9279 / VKM B-1422 / R1).